The primary structure comprises 65 residues: Large ribosomal subunit protein bL33 (65 aa).

The segment at 20-40 is disordered; it reads VPPSEKRSPGVSRYTTEKNRR.

The protein belongs to the bacterial ribosomal protein bL33 family.

The polypeptide is Large ribosomal subunit protein bL33 (Prochlorococcus marinus (strain MIT 9211)).